We begin with the raw amino-acid sequence, 130 residues long: Phosphoribosyl-AMP cyclohydrolase 1 (130 aa).

Asp-77 provides a ligand contact to Mg(2+). A Zn(2+)-binding site is contributed by Cys-78. Residues Asp-79 and Asp-81 each contribute to the Mg(2+) site. Zn(2+) contacts are provided by Cys-95 and Cys-102.

Belongs to the PRA-CH family. As to quaternary structure, homodimer. Mg(2+) serves as cofactor. Requires Zn(2+) as cofactor.

The protein localises to the cytoplasm. The catalysed reaction is 1-(5-phospho-beta-D-ribosyl)-5'-AMP + H2O = 1-(5-phospho-beta-D-ribosyl)-5-[(5-phospho-beta-D-ribosylamino)methylideneamino]imidazole-4-carboxamide. The protein operates within amino-acid biosynthesis; L-histidine biosynthesis; L-histidine from 5-phospho-alpha-D-ribose 1-diphosphate: step 3/9. Its function is as follows. Catalyzes the hydrolysis of the adenine ring of phosphoribosyl-AMP. This chain is Phosphoribosyl-AMP cyclohydrolase 1, found in Pseudomonas fluorescens (strain ATCC BAA-477 / NRRL B-23932 / Pf-5).